A 168-amino-acid polypeptide reads, in one-letter code: Phosphopantetheine adenylyltransferase (168 aa).

Ser-8 lines the substrate pocket. Residues 8–9 and His-16 each bind ATP; that span reads SF. Substrate-binding residues include Lys-40, Thr-72, and Arg-86. ATP contacts are provided by residues 87–89, Glu-97, and 122–128; these read GLR and YSFLSSS.

The protein belongs to the bacterial CoaD family. In terms of assembly, homohexamer. Mg(2+) serves as cofactor.

It is found in the cytoplasm. The catalysed reaction is (R)-4'-phosphopantetheine + ATP + H(+) = 3'-dephospho-CoA + diphosphate. The protein operates within cofactor biosynthesis; coenzyme A biosynthesis; CoA from (R)-pantothenate: step 4/5. Its function is as follows. Reversibly transfers an adenylyl group from ATP to 4'-phosphopantetheine, yielding dephospho-CoA (dPCoA) and pyrophosphate. This Thermosynechococcus vestitus (strain NIES-2133 / IAM M-273 / BP-1) protein is Phosphopantetheine adenylyltransferase.